The primary structure comprises 1307 residues: Rab3 GTPase-activating protein regulatory subunit (1307 aa).

Belongs to the Rab3-GAP regulatory subunit family. The Rab3 GTPase-activating complex is a heterodimer composed of rbg-1 and rbg-2.

Its subcellular location is the cytoplasm. Functionally, probable regulatory subunit of a GTPase activating protein that has specificity for Rab3 subfamily. Rab3 proteins are involved in regulated exocytosis of neurotransmitters and hormones. Rab3 GTPase-activating complex specifically converts active Rab3-GTP to the inactive form Rab3-GDP. The sequence is that of Rab3 GTPase-activating protein regulatory subunit (rbg-2) from Caenorhabditis elegans.